The chain runs to 442 residues: D-serine dehydratase (442 aa).

K118 is modified (N6-(pyridoxal phosphate)lysine).

This sequence belongs to the serine/threonine dehydratase family. DsdA subfamily. Monomer. Pyridoxal 5'-phosphate is required as a cofactor.

It carries out the reaction D-serine = pyruvate + NH4(+). This is D-serine dehydratase from Escherichia coli (strain K12 / MC4100 / BW2952).